A 129-amino-acid chain; its full sequence is Protein FYV12 (129 aa).

Residue N91 is glycosylated (N-linked (GlcNAc...) asparagine). Residues 109–128 traverse the membrane as a helical segment; the sequence is LMTTFLLYVLYVCIYISAFI.

The protein localises to the membrane. In terms of biological role, involved in K1 killer toxin resistance. The sequence is that of Protein FYV12 (FYV12) from Saccharomyces cerevisiae (strain ATCC 204508 / S288c) (Baker's yeast).